Consider the following 221-residue polypeptide: Retinitis pigmentosa 9 protein (221 aa).

Basic and acidic residues-rich tracts occupy residues 1-10 (MSSRPGREDV), 17-29 (RPREPPEQELQRR), and 60-69 (IKEDETKPED). Residues 1–76 (MSSRPGREDV…PEDCIPDVPG (76 aa)) form a disordered region. Residues 1-155 (MSSRPGREDV…RDNKRHEKDV (155 aa)) form a PIM1-binding region. The CCHC-type zinc-finger motif lies at 104 to 122 (QCWRCKRYGHRTGDKECPF). Lysine 129 participates in a covalent cross-link: Glycyl lysine isopeptide (Lys-Gly) (interchain with G-Cter in SUMO2). A compositionally biased stretch (basic and acidic residues) spans 147-156 (DNKRHEKDVR). The tract at residues 147–221 (DNKRHEKDVR…SKSNEGSDSE (75 aa)) is disordered. The span at 184 to 212 (KHKKKKKKEKHKKRKKEKKKKKKRKHKSS) shows a compositional bias: basic residues. Residues serine 212 and serine 214 each carry the phosphoserine; by PIM1 modification.

Binds to PIM1. Binds to ZNHIT4. In terms of tissue distribution, appears to be expressed in a wide range of tissues.

It is found in the nucleus. Is thought to be a target protein for the PIM1 kinase. May play some roles in B-cell proliferation in association with PIM1. In Homo sapiens (Human), this protein is Retinitis pigmentosa 9 protein (RP9).